The primary structure comprises 1086 residues: DNA polymerase delta catalytic subunit (1086 aa).

The disordered stretch occupies residues 1–64; the sequence is MTDRSSNEGV…KTSSFEDELA (64 aa). Residues 29-58 show a composition bias toward basic and acidic residues; sequence EITDVKRRRLSERNGYGDKKGSSSKEKTSS. Residues C993, C996, C1008, and C1011 each contribute to the Zn(2+) site. The segment at 993-1011 adopts a CysA-type zinc-finger fold; it reads CLGCKAPIKKGKTALCENC. Residues C1040, C1043, C1053, and C1058 each coordinate [4Fe-4S] cluster. The short motif at 1040–1058 is the CysB motif element; sequence CQRCQGSMHQDVICTSRDC.

It belongs to the DNA polymerase type-B family. In terms of assembly, heterotetramer that consist of the pol3, cdc1, cdc27 and cdm1 subunits. The pol3 subunit contains the polymerase active site and most likely the active site for the 3'-5' exonuclease activity. The cofactor is [4Fe-4S] cluster.

Its subcellular location is the nucleus. The catalysed reaction is DNA(n) + a 2'-deoxyribonucleoside 5'-triphosphate = DNA(n+1) + diphosphate. Functionally, catalytic component of DNA polymerase delta (DNA polymerase III) which participates in chromosomal DNA replication. Required during synthesis of the lagging DNA strands at the replication fork, binds at/or near replication origins and moves along DNA with the replication fork. Participates in leading strand synthesis during replication initiation and termination. Has 3'-5' proofreading exonuclease activity that corrects errors arising during DNA replication. The sequence is that of DNA polymerase delta catalytic subunit (pol3) from Schizosaccharomyces pombe (strain 972 / ATCC 24843) (Fission yeast).